A 363-amino-acid polypeptide reads, in one-letter code: 3-dehydroquinate synthase (363 aa).

NAD(+)-binding positions include 107-111 (GVIGD), 131-132 (TT), lysine 144, and lysine 153. 3 residues coordinate Zn(2+): glutamate 186, histidine 251, and histidine 268.

The protein belongs to the sugar phosphate cyclases superfamily. Dehydroquinate synthase family. It depends on NAD(+) as a cofactor. Co(2+) is required as a cofactor. Zn(2+) serves as cofactor.

It is found in the cytoplasm. It carries out the reaction 7-phospho-2-dehydro-3-deoxy-D-arabino-heptonate = 3-dehydroquinate + phosphate. It participates in metabolic intermediate biosynthesis; chorismate biosynthesis; chorismate from D-erythrose 4-phosphate and phosphoenolpyruvate: step 2/7. Catalyzes the conversion of 3-deoxy-D-arabino-heptulosonate 7-phosphate (DAHP) to dehydroquinate (DHQ). The chain is 3-dehydroquinate synthase from Nostoc sp. (strain PCC 7120 / SAG 25.82 / UTEX 2576).